The following is a 225-amino-acid chain: Uracil-DNA glycosylase (225 aa).

Catalysis depends on Asp-65, which acts as the Proton acceptor.

The protein belongs to the uracil-DNA glycosylase (UDG) superfamily. UNG family.

Its subcellular location is the cytoplasm. The catalysed reaction is Hydrolyzes single-stranded DNA or mismatched double-stranded DNA and polynucleotides, releasing free uracil.. Excises uracil residues from the DNA which can arise as a result of misincorporation of dUMP residues by DNA polymerase or due to deamination of cytosine. The sequence is that of Uracil-DNA glycosylase from Bacillus mycoides (strain KBAB4) (Bacillus weihenstephanensis).